The following is a 188-amino-acid chain: ATP synthase subunit b 1 (188 aa).

The chain crosses the membrane as a helical span at residues 35 to 55 (VHFSSHFFWLAISFGFFYLFI).

This sequence belongs to the ATPase B chain family. In terms of assembly, F-type ATPases have 2 components, F(1) - the catalytic core - and F(0) - the membrane proton channel. F(1) has five subunits: alpha(3), beta(3), gamma(1), delta(1), epsilon(1). F(0) has three main subunits: a(1), b(2) and c(10-14). The alpha and beta chains form an alternating ring which encloses part of the gamma chain. F(1) is attached to F(0) by a central stalk formed by the gamma and epsilon chains, while a peripheral stalk is formed by the delta and b chains.

The protein localises to the cell inner membrane. F(1)F(0) ATP synthase produces ATP from ADP in the presence of a proton or sodium gradient. F-type ATPases consist of two structural domains, F(1) containing the extramembraneous catalytic core and F(0) containing the membrane proton channel, linked together by a central stalk and a peripheral stalk. During catalysis, ATP synthesis in the catalytic domain of F(1) is coupled via a rotary mechanism of the central stalk subunits to proton translocation. Its function is as follows. Component of the F(0) channel, it forms part of the peripheral stalk, linking F(1) to F(0). The sequence is that of ATP synthase subunit b 1 from Bartonella tribocorum (strain CIP 105476 / IBS 506).